A 227-amino-acid polypeptide reads, in one-letter code: Ubiquitin domain-containing protein 1 (227 aa).

A disordered region spans residues 1-36 (MGNCVGRQRRERPTAPGHPRKRAGRNEPLKKERLKW). Residues 24–36 (GRNEPLKKERLKW) are compositionally biased toward basic and acidic residues. A Ubiquitin-like domain is found at 149 to 224 (FPLKVRLSTG…IQVIINQPPP (76 aa)).

In terms of assembly, interacts with UBTD1.

May be involved in the regulation of cellular senescence through a positive feedback loop with TP53. Is a TP53 downstream target gene that increases the stability of TP53 protein by promoting the ubiquitination and degradation of MDM2. The protein is Ubiquitin domain-containing protein 1 (UBTD1) of Bos taurus (Bovine).